The following is a 343-amino-acid chain: MKTVSIIGGTGYTGSELLRLLSNHDKVEVLNVTSRKEAGKKLTDFHPQVRNLRNYNDLEFQNIAPEDIDTDIVFCATPHGASMAIVPTLHEKGINIIDLSGDYRFEDIEMYESWYGLKHTGKIESAVYGLPELHREKIKKSKTIANPGCYPTGAILSMAPLVANDLVDERIIFDSKSGVSGAGVVASQTTHFPNVNENLGAYKITKHRHSPEIGKELEYLGNKRLKVSFTPHLLPVTRGILTTAHSYLKEDVSRVDVIEIYEEFYKDEFFVRIFEESMPSLTGVRGTNFCDIGGFEIDQHGRIVVVSAIDNLVKGASGQAIQNMNIIMGFDEKEGLSVGGMRP.

Residue C149 is part of the active site.

This sequence belongs to the NAGSA dehydrogenase family. Type 1 subfamily.

The protein localises to the cytoplasm. It catalyses the reaction N-acetyl-L-glutamate 5-semialdehyde + phosphate + NADP(+) = N-acetyl-L-glutamyl 5-phosphate + NADPH + H(+). Its pathway is amino-acid biosynthesis; L-arginine biosynthesis; N(2)-acetyl-L-ornithine from L-glutamate: step 3/4. In terms of biological role, catalyzes the NADPH-dependent reduction of N-acetyl-5-glutamyl phosphate to yield N-acetyl-L-glutamate 5-semialdehyde. The chain is N-acetyl-gamma-glutamyl-phosphate reductase from Methanococcus maripaludis (strain C5 / ATCC BAA-1333).